A 530-amino-acid polypeptide reads, in one-letter code: Bifunctional purine biosynthesis protein PurH (530 aa).

The MGS-like domain occupies 1–148 (MNNARPIRRA…KNHKDVTIVV (148 aa)).

Belongs to the PurH family.

It catalyses the reaction (6R)-10-formyltetrahydrofolate + 5-amino-1-(5-phospho-beta-D-ribosyl)imidazole-4-carboxamide = 5-formamido-1-(5-phospho-D-ribosyl)imidazole-4-carboxamide + (6S)-5,6,7,8-tetrahydrofolate. The catalysed reaction is IMP + H2O = 5-formamido-1-(5-phospho-D-ribosyl)imidazole-4-carboxamide. Its pathway is purine metabolism; IMP biosynthesis via de novo pathway; 5-formamido-1-(5-phospho-D-ribosyl)imidazole-4-carboxamide from 5-amino-1-(5-phospho-D-ribosyl)imidazole-4-carboxamide (10-formyl THF route): step 1/1. It functions in the pathway purine metabolism; IMP biosynthesis via de novo pathway; IMP from 5-formamido-1-(5-phospho-D-ribosyl)imidazole-4-carboxamide: step 1/1. This is Bifunctional purine biosynthesis protein PurH from Aliivibrio fischeri (strain ATCC 700601 / ES114) (Vibrio fischeri).